Reading from the N-terminus, the 382-residue chain is V-type proton ATPase subunit C 1 (382 aa).

N-acetylthreonine is present on Thr2.

The protein belongs to the V-ATPase C subunit family. In terms of assembly, V-ATPase is a heteromultimeric enzyme made up of two complexes: the ATP-hydrolytic V1 complex and the proton translocation V0 complex. The V1 complex consists of three catalytic AB heterodimers that form a heterohexamer, three peripheral stalks each consisting of EG heterodimers, one central rotor including subunits D and F, and the regulatory subunits C and H. The proton translocation complex V0 consists of the proton transport subunit a, a ring of proteolipid subunits c9c'', rotary subunit d, subunits e and f, and the accessory subunits ATP6AP1/Ac45 and ATP6AP2/PRR. In terms of tissue distribution, ubiquitous. Abundant in brain, liver, kidney and testis.

The protein localises to the cytoplasmic vesicle. It localises to the secretory vesicle. It is found in the synaptic vesicle membrane. The protein resides in the clathrin-coated vesicle membrane. Its function is as follows. Subunit of the V1 complex of vacuolar(H+)-ATPase (V-ATPase), a multisubunit enzyme composed of a peripheral complex (V1) that hydrolyzes ATP and a membrane integral complex (V0) that translocates protons. V-ATPase is responsible for acidifying and maintaining the pH of intracellular compartments and in some cell types, is targeted to the plasma membrane, where it is responsible for acidifying the extracellular environment. Subunit C is necessary for the assembly of the catalytic sector of the enzyme and is likely to have a specific function in its catalytic activity. The chain is V-type proton ATPase subunit C 1 (Atp6v1c1) from Mus musculus (Mouse).